We begin with the raw amino-acid sequence, 629 residues long: tRNA uridine 5-carboxymethylaminomethyl modification enzyme MnmG (629 aa).

13 to 18 (GGGHAG) is a binding site for FAD. 273–287 (GPRYCPSIEDKITRF) provides a ligand contact to NAD(+).

Belongs to the MnmG family. Homodimer. Heterotetramer of two MnmE and two MnmG subunits. FAD is required as a cofactor.

It is found in the cytoplasm. NAD-binding protein involved in the addition of a carboxymethylaminomethyl (cmnm) group at the wobble position (U34) of certain tRNAs, forming tRNA-cmnm(5)s(2)U34. This is tRNA uridine 5-carboxymethylaminomethyl modification enzyme MnmG from Colwellia psychrerythraea (strain 34H / ATCC BAA-681) (Vibrio psychroerythus).